The primary structure comprises 410 residues: Argininosuccinate synthase (410 aa).

Residues 13–21 (AYSGGLDTS) and Ala-40 contribute to the ATP site. Residues Tyr-91 and Ser-96 each coordinate L-citrulline. Gly-121 provides a ligand contact to ATP. The L-aspartate site is built by Thr-123, Asn-127, and Asp-128. Asn-127 serves as a coordination point for L-citrulline. Residues Arg-131, Ser-182, Ser-191, Glu-267, and Tyr-279 each coordinate L-citrulline.

The protein belongs to the argininosuccinate synthase family. Type 1 subfamily. Homotetramer.

It localises to the cytoplasm. The enzyme catalyses L-citrulline + L-aspartate + ATP = 2-(N(omega)-L-arginino)succinate + AMP + diphosphate + H(+). It functions in the pathway amino-acid biosynthesis; L-arginine biosynthesis; L-arginine from L-ornithine and carbamoyl phosphate: step 2/3. This is Argininosuccinate synthase from Gluconobacter oxydans (strain 621H) (Gluconobacter suboxydans).